We begin with the raw amino-acid sequence, 164 residues long: UPF0303 protein R02983 (164 aa).

The protein belongs to the UPF0303 family.

This chain is UPF0303 protein R02983, found in Rhizobium meliloti (strain 1021) (Ensifer meliloti).